A 94-amino-acid chain; its full sequence is Progonadoliberin-3 (94 aa).

Positions 1–23 (MEGKGRVLVQLLMLACVLEVSLC) are cleaved as a signal peptide. Pyrrolidone carboxylic acid is present on Gln24. Gly33 is modified (glycine amide).

This sequence belongs to the GnRH family.

It localises to the secreted. Stimulates the secretion of gonadotropins. The protein is Progonadoliberin-3 (gnrh3) of Carassius auratus (Goldfish).